The sequence spans 148 residues: UPF0756 membrane protein CKO_01811 (148 aa).

4 helical membrane-spanning segments follow: residues 14–34 (ALGFISHNTTVAVSILVLIIV), 51–71 (LTVGIIILTIGVMAPIASGSL), 86–106 (LVAIAIGVFVSWLGGRGVTLM), and 121–141 (VLGVALFRGVPVGPLIAAGLV).

The protein belongs to the UPF0756 family.

The protein resides in the cell membrane. In Citrobacter koseri (strain ATCC BAA-895 / CDC 4225-83 / SGSC4696), this protein is UPF0756 membrane protein CKO_01811.